The primary structure comprises 820 residues: Probable protease Ga0182885_104520 (820 aa).

This sequence belongs to the peptidase C25 family.

Probably a dedicated protease for substrate gasdermin bGSDM; cleaves the bGSDM precursor, releasing the pore-forming moiety, which integrates into the membrane and triggers cell death. Involved in defense against bacteriophages. Expression of bacterial gasdermin (bGSDM) and this neighboring protease is toxic in E.coli. This chain is Probable protease Ga0182885_104520, found in Desulfuromonadales bacterium.